The sequence spans 617 residues: V-type proton ATPase catalytic subunit A (617 aa).

A Phosphothreonine modification is found at T136. An ATP-binding site is contributed by 250-257 (GAFGCGKT). S384 is modified (phosphoserine; by AMPK).

Belongs to the ATPase alpha/beta chains family. V-ATPase is a heteromultimeric enzyme made up of two complexes: the ATP-hydrolytic V1 complex and the proton translocation V0 complex. The V1 complex consists of three catalytic AB heterodimers that form a heterohexamer, three peripheral stalks each consisting of EG heterodimers, one central rotor including subunits D and F, and the regulatory subunits C and H. The proton translocation complex V0 consists of the proton transport subunit a, a ring of proteolipid subunits c9c'', rotary subunit d, subunits e and f, and the accessory subunits ATP6AP1/Ac45 and ATP6AP2/PRR. Interacts with the V0 complex V-ATPase subunit a4 ATP6V0A4. Interacts with WFS1. Interacts with alpha-crystallin B chain/CRYAB and with MTOR, forming a ternary complex. Phosphorylation at Ser-384 by AMPK down-regulates its enzyme activity. Expressed in brain (at protein level).

The protein localises to the cytoplasm. It is found in the cytosol. It localises to the cytoplasmic vesicle. The protein resides in the secretory vesicle. Its subcellular location is the clathrin-coated vesicle membrane. The protein localises to the lysosome. It catalyses the reaction ATP + H2O + 4 H(+)(in) = ADP + phosphate + 5 H(+)(out). ATP hydrolysis occurs at the interface between the nucleotide-binding domains of subunits A and B. ATP hydrolysis triggers a conformational change in the subunits D and F, which induces a shift of subunit d. The c-ring is subsequently rotated and results in a continuous proton translocation across the membrane. The V-ATPase is inhibited by bafilomycin A. In terms of biological role, catalytic subunit of the V1 complex of vacuolar(H+)-ATPase (V-ATPase), a multisubunit enzyme composed of a peripheral complex (V1) that hydrolyzes ATP and a membrane integral complex (V0) that translocates protons. V-ATPase is responsible for acidifying and maintaining the pH of intracellular compartments and in some cell types, is targeted to the plasma membrane, where it is responsible for acidifying the extracellular environment. In aerobic conditions, involved in intracellular iron homeostasis, thus triggering the activity of Fe(2+) prolyl hydroxylase (PHD) enzymes, and leading to HIF1A hydroxylation and subsequent proteasomal degradation. May play a role in neurite development and synaptic connectivity. This chain is V-type proton ATPase catalytic subunit A (ATP6V1A), found in Bos taurus (Bovine).